The following is a 286-amino-acid chain: MNINGYTRMAAVVANPIKHSLSPFIHNLAFDLTNENGVYLAWEVEAEKLPAIVDNVRTLDMYGLNISMPYKTEITPFMDELSPAAELIGAVNTVVNQSGKLIGHNTDGIGFFNSLEKYHFNIQNKQMLILGGGGAAIAIIAQAALSGAKKIVVAARKSASYIPLKEKLEKLSVKTGIEILLTDLSEADRLQKELKQTDLLVNATSVGMDGESLPLEKSLVLPEKLLVVDAIYKVRETPFLRWAKGQGAQTENGLGMLIGQAAESFYLWTGKKMPVAEITLEMEKEA.

Residues serine 20–serine 22 and serine 67 contribute to the shikimate site. Catalysis depends on lysine 71, which acts as the Proton acceptor. Shikimate is bound by residues asparagine 92 and aspartate 107. NADP(+) contacts are provided by residues glycine 131 to alanine 135 and alanine 230. Tyrosine 232 is a binding site for shikimate. Glycine 253 is a binding site for NADP(+).

It belongs to the shikimate dehydrogenase family. In terms of assembly, homodimer.

The catalysed reaction is shikimate + NADP(+) = 3-dehydroshikimate + NADPH + H(+). The protein operates within metabolic intermediate biosynthesis; chorismate biosynthesis; chorismate from D-erythrose 4-phosphate and phosphoenolpyruvate: step 4/7. In terms of biological role, involved in the biosynthesis of the chorismate, which leads to the biosynthesis of aromatic amino acids. Catalyzes the reversible NADPH linked reduction of 3-dehydroshikimate (DHSA) to yield shikimate (SA). The polypeptide is Shikimate dehydrogenase (NADP(+)) (Lactococcus lactis subsp. lactis (strain IL1403) (Streptococcus lactis)).